Reading from the N-terminus, the 161-residue chain is RNA pyrophosphohydrolase (161 aa).

In terms of domain architecture, Nudix hydrolase spans 6-149 (GYRPNVGIIL…KKDVYRRALK (144 aa)). The Nudix box signature appears at 38–59 (GGIKSDETPEEALFRELKEEVG).

This sequence belongs to the Nudix hydrolase family. RppH subfamily. A divalent metal cation serves as cofactor.

In terms of biological role, accelerates the degradation of transcripts by removing pyrophosphate from the 5'-end of triphosphorylated RNA, leading to a more labile monophosphorylated state that can stimulate subsequent ribonuclease cleavage. The protein is RNA pyrophosphohydrolase of Marinomonas sp. (strain MWYL1).